Here is a 271-residue protein sequence, read N- to C-terminus: 3-methyl-2-oxobutanoate hydroxymethyltransferase (271 aa).

The Mg(2+) site is built by Asp53 and Asp92. 3-methyl-2-oxobutanoate-binding positions include 53 to 54, Asp92, and Lys120; that span reads DS. Mg(2+) is bound at residue Glu122. The active-site Proton acceptor is Glu189.

The protein belongs to the PanB family. In terms of assembly, homodecamer; pentamer of dimers. Mg(2+) is required as a cofactor.

It is found in the cytoplasm. It catalyses the reaction 3-methyl-2-oxobutanoate + (6R)-5,10-methylene-5,6,7,8-tetrahydrofolate + H2O = 2-dehydropantoate + (6S)-5,6,7,8-tetrahydrofolate. It functions in the pathway cofactor biosynthesis; (R)-pantothenate biosynthesis; (R)-pantoate from 3-methyl-2-oxobutanoate: step 1/2. In terms of biological role, catalyzes the reversible reaction in which hydroxymethyl group from 5,10-methylenetetrahydrofolate is transferred onto alpha-ketoisovalerate to form ketopantoate. In Burkholderia thailandensis (strain ATCC 700388 / DSM 13276 / CCUG 48851 / CIP 106301 / E264), this protein is 3-methyl-2-oxobutanoate hydroxymethyltransferase.